We begin with the raw amino-acid sequence, 242 residues long: Probable transcriptional regulatory protein lp_2253 (242 aa).

The disordered stretch occupies residues 1-21 (MSGHSKWHNIQGRKNAQDAKR).

This sequence belongs to the TACO1 family.

Its subcellular location is the cytoplasm. This Lactiplantibacillus plantarum (strain ATCC BAA-793 / NCIMB 8826 / WCFS1) (Lactobacillus plantarum) protein is Probable transcriptional regulatory protein lp_2253.